The following is a 315-amino-acid chain: Small ribosomal subunit protein uS9m (315 aa).

The N-terminal 42 residues, 1-42, are a transit peptide targeting the mitochondrion; the sequence is MMASLRHSITSALRSSRQGCSKSAQWQSLDQQFGALRISSRS. Residues 293–315 are disordered; that stretch reads PRKVERKKHGHVKARKMPTWVKR. Over residues 296–315 the composition is skewed to basic residues; that stretch reads VERKKHGHVKARKMPTWVKR.

This sequence belongs to the universal ribosomal protein uS9 family. In terms of assembly, component of the mitochondrial small ribosomal subunit (mt-SSU). Mature N.crassa 74S mitochondrial ribosomes consist of a small (37S) and a large (54S) subunit. The 37S small subunit contains a 16S ribosomal RNA (16S mt-rRNA) and 32 different proteins. The 54S large subunit contains a 23S rRNA (23S mt-rRNA) and 42 different proteins.

Its subcellular location is the mitochondrion. In terms of biological role, component of the mitochondrial ribosome (mitoribosome), a dedicated translation machinery responsible for the synthesis of mitochondrial genome-encoded proteins, including at least some of the essential transmembrane subunits of the mitochondrial respiratory chain. The mitoribosomes are attached to the mitochondrial inner membrane and translation products are cotranslationally integrated into the membrane. The sequence is that of Small ribosomal subunit protein uS9m (mrp-9) from Neurospora crassa (strain ATCC 24698 / 74-OR23-1A / CBS 708.71 / DSM 1257 / FGSC 987).